The primary structure comprises 319 residues: Acetyl esterase (319 aa).

An Involved in the stabilization of the negatively charged intermediate by the formation of the oxyanion hole motif is present at residues 91–93 (HGG). Residues Ser-165, Asp-262, and His-292 contribute to the active site.

This sequence belongs to the 'GDXG' lipolytic enzyme family. Homodimer. Interacts with MalT and MelA.

Its subcellular location is the cytoplasm. Functionally, displays esterase activity towards short chain fatty esters (acyl chain length of up to 8 carbons). Able to hydrolyze triacetylglycerol (triacetin) and tributyrylglycerol (tributyrin), but not trioleylglycerol (triolein) or cholesterol oleate. Negatively regulates MalT activity by antagonizing maltotriose binding. Inhibits MelA galactosidase activity. The polypeptide is Acetyl esterase (Escherichia coli O139:H28 (strain E24377A / ETEC)).